The primary structure comprises 337 residues: Ribosomal RNA small subunit methyltransferase C (337 aa).

This sequence belongs to the methyltransferase superfamily. RsmC family. In terms of assembly, monomer.

It localises to the cytoplasm. It catalyses the reaction guanosine(1207) in 16S rRNA + S-adenosyl-L-methionine = N(2)-methylguanosine(1207) in 16S rRNA + S-adenosyl-L-homocysteine + H(+). Its function is as follows. Specifically methylates the guanine in position 1207 of 16S rRNA in the 30S particle. This chain is Ribosomal RNA small subunit methyltransferase C, found in Acinetobacter baumannii (strain AB307-0294).